A 424-amino-acid chain; its full sequence is Type II methyltransferase M.BspRI (424 aa).

In terms of domain architecture, SAM-dependent MTase C5-type spans 58–408 (FNVLSLFCGA…KSIAQFAADY (351 aa)). The active-site S-methylcysteine intermediate is the Cys-156. S-methylcysteine; by autocatalysis is present on Cys-181.

Belongs to the class I-like SAM-binding methyltransferase superfamily. C5-methyltransferase family. As to quaternary structure, monomer. Post-translationally, in the absence of DNA, can self-methylate two cysteine residues.

The enzyme catalyses a 2'-deoxycytidine in DNA + S-adenosyl-L-methionine = a 5-methyl-2'-deoxycytidine in DNA + S-adenosyl-L-homocysteine + H(+). A methylase, recognizes the double-stranded sequence 5'-GGCC-3', methylates C-3 on both strands, and protects the DNA from cleavage by the BspRI endonuclease. The protein is Type II methyltransferase M.BspRI (bspRIM) of Lysinibacillus sphaericus (Bacillus sphaericus).